We begin with the raw amino-acid sequence, 65 residues long: Large ribosomal subunit protein bL33m (65 aa).

The N-terminal 8 residues, Met1–Leu8, are a transit peptide targeting the mitochondrion.

Belongs to the bacterial ribosomal protein bL33 family. Component of the mitochondrial ribosome large subunit (39S) which comprises a 16S rRNA and about 50 distinct proteins.

The protein localises to the mitochondrion. The sequence is that of Large ribosomal subunit protein bL33m (mrpl33) from Tetraodon nigroviridis (Spotted green pufferfish).